The following is a 90-amino-acid chain: Cell division topological specificity factor (90 aa).

It belongs to the MinE family.

Functionally, prevents the cell division inhibition by proteins MinC and MinD at internal division sites while permitting inhibition at polar sites. This ensures cell division at the proper site by restricting the formation of a division septum at the midpoint of the long axis of the cell. The sequence is that of Cell division topological specificity factor from Francisella tularensis subsp. tularensis (strain FSC 198).